A 1047-amino-acid chain; its full sequence is Atrial natriuretic peptide receptor 2 (1047 aa).

The first 22 residues, 1–22, serve as a signal peptide directing secretion; sequence MALPSLLLLVAALAGGVRPPGA. Over 23–458 the chain is Extracellular; it reads RNLTLAVVLP…DKTPLSTLAI (436 aa). Asn24 and Asn35 each carry an N-linked (GlcNAc...) asparagine glycan. Cysteines 75 and 101 form a disulfide. Residues Asn161, Asn195, Asn244, Asn277, and Asn349 are each glycosylated (N-linked (GlcNAc...) asparagine). Residues 459–478 traverse the membrane as a helical segment; the sequence is VALGTGITFIMFGVSSFLIF. The Cytoplasmic portion of the chain corresponds to 479–1047; the sequence is RKLMLEKELA…GERKGPPGLL (569 aa). Ser513 is subject to Phosphoserine. In terms of domain architecture, Protein kinase spans 513–786; that stretch reads SRLTLSLRGS…PDFGQIKGFI (274 aa). At Thr516 the chain carries Phosphothreonine. Ser518, Ser522, Ser523, and Ser526 each carry phosphoserine. Thr529 carries the post-translational modification Phosphothreonine. The Guanylate cyclase domain maps to 861–991; sequence TIYFSDIVGF…DTVNTASRME (131 aa).

This sequence belongs to the adenylyl cyclase class-4/guanylyl cyclase family. Phosphorylated. Phosphorylation of the protein kinase-like domain is required for full activation by CNP. Post-translationally, glycosylated.

It localises to the cell membrane. It carries out the reaction GTP = 3',5'-cyclic GMP + diphosphate. Its function is as follows. Receptor for the C-type natriuretic peptide NPPC/CNP hormone. Has guanylate cyclase activity upon binding of its ligand. May play a role in the regulation of skeletal growth. In Homo sapiens (Human), this protein is Atrial natriuretic peptide receptor 2 (NPR2).